The following is a 135-amino-acid chain: Ribosome-binding factor A (135 aa).

The protein belongs to the RbfA family. Monomer. Binds 30S ribosomal subunits, but not 50S ribosomal subunits or 70S ribosomes.

It localises to the cytoplasm. Its function is as follows. One of several proteins that assist in the late maturation steps of the functional core of the 30S ribosomal subunit. Associates with free 30S ribosomal subunits (but not with 30S subunits that are part of 70S ribosomes or polysomes). Required for efficient processing of 16S rRNA. May interact with the 5'-terminal helix region of 16S rRNA. The sequence is that of Ribosome-binding factor A from Hahella chejuensis (strain KCTC 2396).